A 620-amino-acid polypeptide reads, in one-letter code: Rhamnogalacturonan endolyase YesW (620 aa).

An N-terminal signal peptide occupies residues 1 to 37; it reads MRRSCLMIRRRKRMFTAVTLLVLLVMGTSVCPVKAEG. Positions 133-152 are disordered; sequence LDKPAGGTTPKGESYTYSAN. N152 provides a ligand contact to substrate. Ca(2+)-binding residues include D153, D158, D160, D162, Q164, and E166. Position 172 (D172) interacts with substrate. D187 and K207 together coordinate a carbohydrate. Residues D222, D224, D226, K228, and E230 each coordinate Ca(2+). Residues G238 and R255 each coordinate a carbohydrate. Ca(2+)-binding residues include H363, D369, D371, D373, K375, E377, D386, H387, H399, D401, D407, D409, R412, G414, E416, and E422. R452 is a substrate binding site. Positions 457, 459, 462, 464, 466, 496, 498, 500, and 502 each coordinate Ca(2+). 532–534 serves as a coordination point for substrate; that stretch reads NGT. Residues D543, L545, D547, R549, E551, N592, and A594 each contribute to the Ca(2+) site. Residue Y595 coordinates substrate. N596 contributes to the Ca(2+) binding site.

Belongs to the polysaccharide lyase 11 family. In terms of assembly, monomer. It depends on Ca(2+) as a cofactor. Requires Mn(2+) as cofactor.

It localises to the secreted. The catalysed reaction is Endotype eliminative cleavage of L-alpha-rhamnopyranosyl-(1-&gt;4)-alpha-D-galactopyranosyluronic acid bonds of rhamnogalacturonan I domains in ramified hairy regions of pectin leaving L-rhamnopyranose at the reducing end and 4-deoxy-4,5-unsaturated D-galactopyranosyluronic acid at the non-reducing end.. Pectinolytic enzyme that degrades type I rhamnogalacturonan from plant cell walls and releases oligosaccharide products. Degrades rhamnogalacturonan, polygalacturonic acid, pectic acid and pectin. The protein is Rhamnogalacturonan endolyase YesW (yesW) of Bacillus subtilis (strain 168).